Here is a 248-residue protein sequence, read N- to C-terminus: Aspartate/glutamate leucyltransferase (248 aa).

Belongs to the R-transferase family. Bpt subfamily.

Its subcellular location is the cytoplasm. It carries out the reaction N-terminal L-glutamyl-[protein] + L-leucyl-tRNA(Leu) = N-terminal L-leucyl-L-glutamyl-[protein] + tRNA(Leu) + H(+). It catalyses the reaction N-terminal L-aspartyl-[protein] + L-leucyl-tRNA(Leu) = N-terminal L-leucyl-L-aspartyl-[protein] + tRNA(Leu) + H(+). Functionally, functions in the N-end rule pathway of protein degradation where it conjugates Leu from its aminoacyl-tRNA to the N-termini of proteins containing an N-terminal aspartate or glutamate. The protein is Aspartate/glutamate leucyltransferase of Methylobacterium sp. (strain 4-46).